We begin with the raw amino-acid sequence, 578 residues long: Proline--tRNA ligase (578 aa).

It belongs to the class-II aminoacyl-tRNA synthetase family. ProS type 1 subfamily. In terms of assembly, homodimer.

It is found in the cytoplasm. The catalysed reaction is tRNA(Pro) + L-proline + ATP = L-prolyl-tRNA(Pro) + AMP + diphosphate. In terms of biological role, catalyzes the attachment of proline to tRNA(Pro) in a two-step reaction: proline is first activated by ATP to form Pro-AMP and then transferred to the acceptor end of tRNA(Pro). As ProRS can inadvertently accommodate and process non-cognate amino acids such as alanine and cysteine, to avoid such errors it has two additional distinct editing activities against alanine. One activity is designated as 'pretransfer' editing and involves the tRNA(Pro)-independent hydrolysis of activated Ala-AMP. The other activity is designated 'posttransfer' editing and involves deacylation of mischarged Ala-tRNA(Pro). The misacylated Cys-tRNA(Pro) is not edited by ProRS. The chain is Proline--tRNA ligase from Burkholderia ambifaria (strain MC40-6).